The sequence spans 350 residues: RNA 3'-terminal phosphate cyclase (350 aa).

Residues Q107 and 290-294 each bind ATP; that span reads FLGDQ. Residue H316 is the Tele-AMP-histidine intermediate of the active site.

It belongs to the RNA 3'-terminal cyclase family. Type 1 subfamily.

It localises to the cytoplasm. It catalyses the reaction a 3'-end 3'-phospho-ribonucleotide-RNA + ATP = a 3'-end 2',3'-cyclophospho-ribonucleotide-RNA + AMP + diphosphate. In terms of biological role, catalyzes the conversion of 3'-phosphate to a 2',3'-cyclic phosphodiester at the end of RNA. The mechanism of action of the enzyme occurs in 3 steps: (A) adenylation of the enzyme by ATP; (B) transfer of adenylate to an RNA-N3'P to produce RNA-N3'PP5'A; (C) and attack of the adjacent 2'-hydroxyl on the 3'-phosphorus in the diester linkage to produce the cyclic end product. The biological role of this enzyme is unknown but it is likely to function in some aspects of cellular RNA processing. This is RNA 3'-terminal phosphate cyclase from Gloeothece citriformis (strain PCC 7424) (Cyanothece sp. (strain PCC 7424)).